The sequence spans 391 residues: Histamine H4 receptor (391 aa).

Over 1 to 19 (MSESNGTDVLPLTAQVPLA) the chain is Extracellular. N-linked (GlcNAc...) asparagine glycosylation occurs at asparagine 5. A helical transmembrane segment spans residues 20-40 (FLMSLLAFAITIGNAVVILAF). The Cytoplasmic portion of the chain corresponds to 41-52 (VADRNLRHRSNY). A helical membrane pass occupies residues 53–73 (FFLNLAISDFFVGVISIPLYI). Over 74–87 (PHTLFNWNFGSGIC) the chain is Extracellular. A disulfide bond links cysteine 87 and cysteine 166. A helical membrane pass occupies residues 88-108 (MFWLITDYLLCTASVYSIVLI). The Cytoplasmic segment spans residues 109–131 (SYDRYQSVSNAVRYRAQHTGILK). Residues 132–152 (IVAQMVAVWILAFLVNGPMIL) form a helical membrane-spanning segment. Over 153–174 (ASDSWKNSTNTEECEPGFVTEW) the chain is Extracellular. Asparagine 159 carries an N-linked (GlcNAc...) asparagine glycan. The helical transmembrane segment at 175–195 (YILAITAFLEFLLPVSLVVYF) threads the bilayer. Over 196 to 306 (SVQIYWSLWK…LLRGRKLARS (111 aa)) the chain is Cytoplasmic. Residues 307–327 (LAVLLSAFAICWAPYCLFTIV) traverse the membrane as a helical segment. The Extracellular portion of the chain corresponds to 328 to 343 (LSTYRRGERPKSIWYS). The helical transmembrane segment at 344–364 (IAFWLQWFNSLINPFLYPLCH) threads the bilayer. The Cytoplasmic portion of the chain corresponds to 365–391 (RRFQKAFWKILCVTKQPAPSQTQSVSS).

It belongs to the G-protein coupled receptor 1 family. Interacts with TSPAN4.

It localises to the cell membrane. Its function is as follows. The H4 subclass of histamine receptors could mediate the histamine signals in peripheral tissues. Displays a significant level of constitutive activity (spontaneous activity in the absence of agonist). The chain is Histamine H4 receptor (Hrh4) from Rattus norvegicus (Rat).